The chain runs to 157 residues: Endoribonuclease YbeY (157 aa).

Positions 116, 120, and 126 each coordinate Zn(2+).

Belongs to the endoribonuclease YbeY family. Zn(2+) serves as cofactor.

It is found in the cytoplasm. In terms of biological role, single strand-specific metallo-endoribonuclease involved in late-stage 70S ribosome quality control and in maturation of the 3' terminus of the 16S rRNA. The polypeptide is Endoribonuclease YbeY (Paenarthrobacter aurescens (strain TC1)).